A 136-amino-acid chain; its full sequence is Histone H3.3C (136 aa).

A compositionally biased stretch (polar residues) spans 1-10 (MARTKQTACK). A disordered region spans residues 1 to 39 (MARTKQTACKSTGRKAPRKQLATKAAHKSAPAMGGVKKP). Arg3 carries the asymmetric dimethylarginine; by PRMT6 modification. Thr4 carries the phosphothreonine; by HASPIN modification. An Allysine; alternate modification is found at Lys5. At Lys5 the chain carries N6,N6,N6-trimethyllysine; alternate. Lys5 is subject to N6,N6-dimethyllysine; alternate. Lys5 carries the N6-(2-hydroxyisobutyryl)lysine; alternate modification. The residue at position 5 (Lys5) is an N6-acetyllysine; alternate. Residue Lys5 is modified to N6-methyllysine; alternate. Gln6 is subject to 5-glutamyl dopamine; alternate. A 5-glutamyl serotonin; alternate modification is found at Gln6. Thr7 is subject to Phosphothreonine; by PKC. Lys10 carries the N6-(2-hydroxyisobutyryl)lysine; alternate modification. Lys10 bears the N6-lactoyllysine; alternate mark. N6-methylated lysine is present on Lys10. At Ser11 the chain carries ADP-ribosylserine; alternate. The residue at position 11 (Ser11) is a Phosphoserine; alternate; by AURKB, AURKC, RPS6KA3, RPS6KA4 and RPS6KA5. Thr12 is subject to Phosphothreonine; by PKC. Position 15 is an N6-(2-hydroxyisobutyryl)lysine; alternate (Lys15). Lys15 is modified (N6-lactoyllysine; alternate). Residue Lys15 is modified to N6-acetyllysine. Lys15 carries the N6-glutaryllysine; alternate modification. At Arg18 the chain carries Asymmetric dimethylarginine. An N6-(2-hydroxyisobutyryl)lysine; alternate mark is found at Lys19, Lys24, and Lys28. Position 19 is an N6-acetyllysine; alternate (Lys19). N6-lactoyllysine; alternate is present on residues Lys19, Lys24, and Lys28. N6-glutaryllysine; alternate is present on residues Lys19, Lys24, and Lys28. An N6-butyryllysine; alternate mark is found at Lys19 and Lys24. Lys19 carries the post-translational modification N6-methylated lysine; alternate. The residue at position 24 (Lys24) is an N6-acetyllysine. Lys28 carries the N6-acetyllysine; alternate modification. Lys28 is subject to N6-methylated lysine; alternate. An ADP-ribosylserine; alternate modification is found at Ser29. The residue at position 29 (Ser29) is a Phosphoserine; alternate; by AURKB, AURKC and RPS6KA5. Position 37 is an N6-(2-hydroxyisobutyryl)lysine; alternate (Lys37). Lys37 is modified (N6-acetyllysine; alternate). Lys37 is subject to N6-methylated lysine; alternate. Tyr42 carries the post-translational modification Phosphotyrosine. N6-(2-hydroxyisobutyryl)lysine; alternate is present on Lys57. Residue Lys57 is modified to N6-lactoyllysine; alternate. Lys57 is modified (N6-glutaryllysine; alternate). Residue Lys57 is modified to N6-succinyllysine; alternate. Ser58 is subject to Phosphoserine. 2 positions are modified to N6-(2-hydroxyisobutyryl)lysine; alternate: Lys65 and Lys80. Lys65 and Lys80 each carry N6-methylated lysine. Residue Lys80 is modified to N6-lactoyllysine; alternate. An N6-glutaryllysine; alternate modification is found at Lys80. At Lys80 the chain carries N6-succinyllysine; alternate. Thr81 is subject to Phosphothreonine. An N6-acetyllysine; alternate mark is found at Lys116 and Lys123. Residues Lys116 and Lys123 each carry the N6-glutaryllysine; alternate modification. At Lys123 the chain carries N6-(2-hydroxyisobutyryl)lysine; alternate. Lys123 bears the N6-methylated lysine; alternate mark. Lys123 bears the N6-succinyllysine; alternate mark.

Belongs to the histone H3 family. In terms of assembly, the nucleosome is a histone octamer containing two molecules each of H2A, H2B, H3 and H4 assembled in one H3-H4 heterotetramer and two H2A-H2B heterodimers. The octamer wraps approximately 147 bp of DNA. In terms of processing, acetylation is generally linked to gene activation. Acetylation on Lys-19 (H3K18ac) and Lys-24 (H3K24ac) favors methylation at Arg-18 (H3R17me). Acetylation at Lys-123 (H3K122ac) by EP300/p300 plays a central role in chromatin structure: localizes at the surface of the histone octamer and stimulates transcription, possibly by promoting nucleosome instability. Post-translationally, asymmetric dimethylation at Arg-18 (H3R17me2a) is linked to gene activation. Asymmetric dimethylation at Arg-3 (H3R2me2a) by PRMT6 is linked to gene repression and is mutually exclusive with H3 Lys-5 methylation (H3K4me2 and H3K4me3). H3R2me2a is present at the 3' of genes regardless of their transcription state and is enriched on inactive promoters, while it is absent on active promoters. Methylation at Lys-5 (H3K4me) and Lys-80 (H3K79me) are linked to gene activation. Methylation at Lys-5 (H3K4me) facilitates subsequent acetylation of H3 and H4. Methylation at Lys-80 (H3K79me) is associated with DNA double-strand break (DSB) responses and is a specific target for TP53BP1. Methylation at Lys-10 (H3K9me) and Lys-28 (H3K27me) are linked to gene repression. Methylation at Lys-10 (H3K9me) is a specific target for HP1 proteins (CBX1, CBX3 and CBX5) and prevents subsequent phosphorylation at Ser-11 (H3S10ph) and acetylation of H3 and H4. Methylation at Lys-5 (H3K4me) and Lys-80 (H3K79me) require preliminary monoubiquitination of H2B at 'Lys-120'. In terms of processing, phosphorylated at Thr-4 (H3T3ph) by HASPIN during prophase and dephosphorylated during anaphase. Phosphorylation at Ser-11 (H3S10ph) by AURKB is crucial for chromosome condensation and cell-cycle progression during mitosis and meiosis. In addition phosphorylation at Ser-11 (H3S10ph) by RPS6KA4 and RPS6KA5 is important during interphase because it enables the transcription of genes following external stimulation, like mitogens, stress, growth factors or UV irradiation and result in the activation of genes, such as c-fos and c-jun. Phosphorylation at Ser-11 (H3S10ph), which is linked to gene activation, prevents methylation at Lys-10 (H3K9me) but facilitates acetylation of H3 and H4. Phosphorylation at Ser-11 (H3S10ph) by AURKB mediates the dissociation of HP1 proteins (CBX1, CBX3 and CBX5) from heterochromatin. Phosphorylation at Ser-11 (H3S10ph) is also an essential regulatory mechanism for neoplastic cell transformation. Phosphorylated at Ser-29 (H3S28ph) by MAP3K20 isoform 1, RPS6KA5 or AURKB during mitosis or upon ultraviolet B irradiation. Phosphorylation at Thr-7 (H3T6ph) by PRKCB is a specific tag for epigenetic transcriptional activation that prevents demethylation of Lys-5 (H3K4me) by LSD1/KDM1A. At centromeres, specifically phosphorylated at Thr-12 (H3T11ph) from prophase to early anaphase, by DAPK3 and PKN1. Phosphorylation at Thr-12 (H3T11ph) by PKN1 or isoform M2 of PKM (PKM2) is a specific tag for epigenetic transcriptional activation that promotes demethylation of Lys-10 (H3K9me) by KDM4C/JMJD2C. Phosphorylation at Tyr-42 (H3Y41ph) by JAK2 promotes exclusion of CBX5 (HP1 alpha) from chromatin. Post-translationally, lysine deamination at Lys-5 (H3K4all) to form allysine only takes place on H3K4me3 and results in gene repression. Butyrylation of histones marks active promoters and competes with histone acetylation. It is present during late spermatogenesis. In terms of processing, succinylation at Lys-80 (H3K79succ) by KAT2A takes place with a maximum frequency around the transcription start sites of genes. It gives a specific tag for epigenetic transcription activation. Desuccinylation at Lys-123 (H3K122succ) by SIRT7 in response to DNA damage promotes chromatin condensation and double-strand breaks (DSBs) repair. Post-translationally, serine ADP-ribosylation constitutes the primary form of ADP-ribosylation of proteins in response to DNA damage. Serine ADP-ribosylation at Ser-11 (H3S10ADPr) is mutually exclusive with phosphorylation at Ser-11 (H3S10ph) and impairs acetylation at Lys-10 (H3K9ac).

The protein localises to the nucleus. It is found in the chromosome. In terms of biological role, core component of nucleosome. Nucleosomes wrap and compact DNA into chromatin, limiting DNA accessibility to the cellular machineries which require DNA as a template. Histones thereby play a central role in transcription regulation, DNA repair, DNA replication and chromosomal stability. DNA accessibility is regulated via a complex set of post-translational modifications of histones, also called histone code, and nucleosome remodeling. The sequence is that of Histone H3.3C from Cairina moschata (Muscovy duck).